Reading from the N-terminus, the 98-residue chain is NADH-ubiquinone oxidoreductase chain 4L (98 aa).

3 helical membrane passes run 1–21 (MSLVYMNTALAFSISMLGLLM), 30–50 (LLCLEGMMLSLFTLGAITILT), and 61–81 (IVLLVFAACEAAVGLSLLVMV).

This sequence belongs to the complex I subunit 4L family. In terms of assembly, core subunit of respiratory chain NADH dehydrogenase (Complex I) which is composed of 45 different subunits.

It is found in the mitochondrion inner membrane. It carries out the reaction a ubiquinone + NADH + 5 H(+)(in) = a ubiquinol + NAD(+) + 4 H(+)(out). Core subunit of the mitochondrial membrane respiratory chain NADH dehydrogenase (Complex I) which catalyzes electron transfer from NADH through the respiratory chain, using ubiquinone as an electron acceptor. Part of the enzyme membrane arm which is embedded in the lipid bilayer and involved in proton translocation. The protein is NADH-ubiquinone oxidoreductase chain 4L (MT-ND4L) of Crocidura russula (Greater white-toothed shrew).